A 318-amino-acid polypeptide reads, in one-letter code: 4-hydroxy-3-methylbut-2-enyl diphosphate reductase (318 aa).

C12 provides a ligand contact to [4Fe-4S] cluster. (2E)-4-hydroxy-3-methylbut-2-enyl diphosphate-binding residues include H41 and H74. Dimethylallyl diphosphate contacts are provided by H41 and H74. Residues H41 and H74 each contribute to the isopentenyl diphosphate site. C96 provides a ligand contact to [4Fe-4S] cluster. H124 contacts (2E)-4-hydroxy-3-methylbut-2-enyl diphosphate. H124 is a dimethylallyl diphosphate binding site. Position 124 (H124) interacts with isopentenyl diphosphate. E126 acts as the Proton donor in catalysis. (2E)-4-hydroxy-3-methylbut-2-enyl diphosphate is bound at residue T168. C198 contacts [4Fe-4S] cluster. Positions 226, 227, 228, and 270 each coordinate (2E)-4-hydroxy-3-methylbut-2-enyl diphosphate. Positions 226, 227, 228, and 270 each coordinate dimethylallyl diphosphate. Residues S226, S227, N228, and S270 each contribute to the isopentenyl diphosphate site.

Belongs to the IspH family. The cofactor is [4Fe-4S] cluster.

The enzyme catalyses isopentenyl diphosphate + 2 oxidized [2Fe-2S]-[ferredoxin] + H2O = (2E)-4-hydroxy-3-methylbut-2-enyl diphosphate + 2 reduced [2Fe-2S]-[ferredoxin] + 2 H(+). The catalysed reaction is dimethylallyl diphosphate + 2 oxidized [2Fe-2S]-[ferredoxin] + H2O = (2E)-4-hydroxy-3-methylbut-2-enyl diphosphate + 2 reduced [2Fe-2S]-[ferredoxin] + 2 H(+). The protein operates within isoprenoid biosynthesis; dimethylallyl diphosphate biosynthesis; dimethylallyl diphosphate from (2E)-4-hydroxy-3-methylbutenyl diphosphate: step 1/1. Its pathway is isoprenoid biosynthesis; isopentenyl diphosphate biosynthesis via DXP pathway; isopentenyl diphosphate from 1-deoxy-D-xylulose 5-phosphate: step 6/6. In terms of biological role, catalyzes the conversion of 1-hydroxy-2-methyl-2-(E)-butenyl 4-diphosphate (HMBPP) into a mixture of isopentenyl diphosphate (IPP) and dimethylallyl diphosphate (DMAPP). Acts in the terminal step of the DOXP/MEP pathway for isoprenoid precursor biosynthesis. The sequence is that of 4-hydroxy-3-methylbut-2-enyl diphosphate reductase from Psychrobacter sp. (strain PRwf-1).